Here is a 337-residue protein sequence, read N- to C-terminus: MVREEVTISTRTLQWKCVESRVDSKRLYYGRFILSPLMKGQADTIGISMRRALLGEIEGTCITRAKFDKVTHEYSTIVGIEESVHEILMNLKEIVLRSNLYGTLDASICVRGPRSVTAQDIISPPSVEIVDTTQHIANLTEPIDLCIGLQIERDRGYRLKTPNNYQDGSYPIDTVFMPVRNANHSIHSYGNGTEKQEILFLEIWTNGSLTPKEALYEASRNLINLFIPFLHAEEQEILLEDSENISTVPLFTFHNELANLKKNKKGIALKCIFIDQLELPSRTYNCLKRSNIHTLFDLLSNSKEDLMRIEHFRVEDVKQILDILQKNFAMNLPKDFF.

The alpha N-terminal domain (alpha-NTD) stretch occupies residues 1-233 (MVREEVTIST…NLFIPFLHAE (233 aa)). The tract at residues 266 to 337 (GIALKCIFID…FAMNLPKDFF (72 aa)) is alpha C-terminal domain (alpha-CTD).

The protein belongs to the RNA polymerase alpha chain family. In plastids the minimal PEP RNA polymerase catalytic core is composed of four subunits: alpha, beta, beta', and beta''. When a (nuclear-encoded) sigma factor is associated with the core the holoenzyme is formed, which can initiate transcription.

The protein localises to the plastid. It localises to the chloroplast. The enzyme catalyses RNA(n) + a ribonucleoside 5'-triphosphate = RNA(n+1) + diphosphate. Functionally, DNA-dependent RNA polymerase catalyzes the transcription of DNA into RNA using the four ribonucleoside triphosphates as substrates. The polypeptide is DNA-directed RNA polymerase subunit alpha (Ceratophyllum demersum (Rigid hornwort)).